The primary structure comprises 562 residues: Protein wntless (562 aa).

The Cytoplasmic portion of the chain corresponds to Met1 to Lys13. A helical membrane pass occupies residues Leu14–Leu34. At Tyr35–His239 the chain is on the lumenal side. Residue Asn58 is glycosylated (N-linked (GlcNAc...) asparagine). Residues Val240–Trp260 form a helical membrane-spanning segment. At Arg261–Pro270 the chain is on the cytoplasmic side. Residues Ala271–Leu291 traverse the membrane as a helical segment. Residues Glu292–Gln311 are Lumenal-facing. A helical transmembrane segment spans residues Gly312–Ile332. The Cytoplasmic portion of the chain corresponds to Gln333 to Arg344. Residues Tyr345–Ser365 form a helical membrane-spanning segment. The Lumenal portion of the chain corresponds to Glu366 to Lys386. Residues Val387 to Cys407 form a helical membrane-spanning segment. Residues Tyr408 to Arg441 are Cytoplasmic-facing. The helical transmembrane segment at Phe442–Met462 threads the bilayer. Residues Gly463–Ser482 are Lumenal-facing. Residues Ala483 to Tyr503 traverse the membrane as a helical segment. Residues Ala504–Glu562 are Cytoplasmic-facing. Residues Ser538 to Glu562 are disordered. The segment covering Asn539–Thr556 has biased composition (polar residues).

It belongs to the wntless family. In terms of assembly, interacts with wg; in the Golgi. Interacts with Vps35, a component of the retromer complex; wls stability is regulated by Vps35.

The protein resides in the presynaptic cell membrane. The protein localises to the postsynaptic cell membrane. It is found in the cell membrane. Its subcellular location is the endoplasmic reticulum membrane. It localises to the endosome membrane. The protein resides in the golgi apparatus membrane. Functionally, a segment polarity gene required for wingless (wg)-dependent patterning processes, acting in both wg-sending cells and wg-target cells. In non-neuronal cells wls directs wg secretion. The wls traffic loop encompasses the Golgi, the cell surface, an endocytic compartment and a retrograde route leading back to the Golgi, and involves clathrin-mediated endocytosis and the retromer complex (a conserved protein complex consisting of Vps35 and Vps26). In neuronal cells (the larval motorneuron NMJ), the wg signal moves across the synapse via the release of wls-containing exosome-like vesicles. Postsynaptic wls is required for the trafficking of fz2 through the fz2-interacting protein Grip. The polypeptide is Protein wntless (Drosophila persimilis (Fruit fly)).